Reading from the N-terminus, the 278-residue chain is ATP synthase subunit a (278 aa).

A run of 6 helical transmembrane segments spans residues 43–63 (TWHI…LWIF), 104–124 (IAPL…MDMI), 148–168 (DVNI…FYSI), 191–211 (IPVN…SLAL), 222–242 (LIFI…TLGV), and 249–269 (LIFH…LTIV).

This sequence belongs to the ATPase A chain family. In terms of assembly, F-type ATPases have 2 components, CF(1) - the catalytic core - and CF(0) - the membrane proton channel. CF(1) has five subunits: alpha(3), beta(3), gamma(1), delta(1), epsilon(1). CF(0) has three main subunits: a(1), b(2) and c(9-12). The alpha and beta chains form an alternating ring which encloses part of the gamma chain. CF(1) is attached to CF(0) by a central stalk formed by the gamma and epsilon chains, while a peripheral stalk is formed by the delta and b chains.

It is found in the cell inner membrane. In terms of biological role, key component of the proton channel; it plays a direct role in the translocation of protons across the membrane. The chain is ATP synthase subunit a from Shewanella baltica (strain OS185).